The primary structure comprises 87 residues: UPF0297 protein Sca_1229 (87 aa).

It belongs to the UPF0297 family.

The sequence is that of UPF0297 protein Sca_1229 from Staphylococcus carnosus (strain TM300).